The chain runs to 221 residues: Small ribosomal subunit protein uS3 (221 aa).

The region spanning 39 to 107 (IRNYIKEKLY…TVILNIIEVK (69 aa)) is the KH type-2 domain.

Belongs to the universal ribosomal protein uS3 family. As to quaternary structure, part of the 30S ribosomal subunit. Forms a tight complex with proteins S10 and S14.

In terms of biological role, binds the lower part of the 30S subunit head. Binds mRNA in the 70S ribosome, positioning it for translation. This chain is Small ribosomal subunit protein uS3, found in Caldanaerobacter subterraneus subsp. tengcongensis (strain DSM 15242 / JCM 11007 / NBRC 100824 / MB4) (Thermoanaerobacter tengcongensis).